The following is a 366-amino-acid chain: tRNA 2-selenouridine synthase (366 aa).

In terms of domain architecture, Rhodanese spans 12 to 135; it reads FLNDVPMMDA…MRTFLLDTLH (124 aa). The S-selanylcysteine intermediate role is filled by cysteine 95.

Belongs to the SelU family. In terms of assembly, monomer.

The enzyme catalyses 5-methylaminomethyl-2-thiouridine(34) in tRNA + selenophosphate + (2E)-geranyl diphosphate + H2O + H(+) = 5-methylaminomethyl-2-selenouridine(34) in tRNA + (2E)-thiogeraniol + phosphate + diphosphate. It carries out the reaction 5-methylaminomethyl-2-thiouridine(34) in tRNA + (2E)-geranyl diphosphate = 5-methylaminomethyl-S-(2E)-geranyl-thiouridine(34) in tRNA + diphosphate. It catalyses the reaction 5-methylaminomethyl-S-(2E)-geranyl-thiouridine(34) in tRNA + selenophosphate + H(+) = 5-methylaminomethyl-2-(Se-phospho)selenouridine(34) in tRNA + (2E)-thiogeraniol. The catalysed reaction is 5-methylaminomethyl-2-(Se-phospho)selenouridine(34) in tRNA + H2O = 5-methylaminomethyl-2-selenouridine(34) in tRNA + phosphate. In terms of biological role, involved in the post-transcriptional modification of the uridine at the wobble position (U34) of tRNA(Lys), tRNA(Glu) and tRNA(Gln). Catalyzes the conversion of 2-thiouridine (S2U-RNA) to 2-selenouridine (Se2U-RNA). Acts in a two-step process involving geranylation of 2-thiouridine (S2U) to S-geranyl-2-thiouridine (geS2U) and subsequent selenation of the latter derivative to 2-selenouridine (Se2U) in the tRNA chain. This chain is tRNA 2-selenouridine synthase, found in Pseudomonas syringae pv. syringae (strain B728a).